A 698-amino-acid polypeptide reads, in one-letter code: MLIIQIPDGMPDEDACTLGVGITTVGQGLYQSLGLPLPGSRARANFPILIYGGSTATGSLAIQYARLSGCSQIITTCSPRHFDWAKSLGADASFDYRDPDCVQKIKDCTQNTLAHVLDCVSTSASAELCAAAIGSNGGTVSYLLPLKHQREDVEAKYTLAYTAFGEYFSIAGTRKFEARPEDLEFAKMFWKLSEGLVAEGKIRVHPPRVGKDGLKGVLDGFQAMREGQNWIPNMYGYEVGDECRSLHVWADRRSLEIPRAPIDQNATSNLDVAIVGGGIAGVTLALGLLKRGIKPIIYERGRSFREIGAGIGFTPNAEWAMKVLDPEIHAAFKRVTVQNGTDWFIWMDGSLEKEAVVHKMYLGERGFEGCARADFLDELVKSLPQGTVRFSKNLVDIVDEDGASEVRLKFSDGSTASAHIVIGCDGIRSKVRQFVIGGDDQPAHHPHYTHKYAFRGLVPMDKAYAALGQEKTDTRHMYLGPDAHALTFPVAGGKLLNVVAFVTDPSSWPDGEKFTLPASKTDAVKAFERFNSTVRAIIDMLPEELSRWAVFDTYDYPAPTFVRGRVCISGDAAHAAAPYHGAGAGFAVEDAAVLAELLSDAYDYLKISDVEKADIPKSVVLRKALETYNSIRLERAHWLVETSRHIGEIYEGQNADIGLDHTKCAAEIDWRCRKIWDYDVDDMMKQTSTLFKKQLGMI.

NADP(+) is bound by residues 54–57 (STAT), 78–81 (SPRH), Tyr-96, and 279–280 (IA). 3 residues coordinate FAD: Glu-299, Gly-312, and Arg-372. The active site involves Arg-455. Positions 571 and 584 each coordinate FAD.

It in the N-terminal section; belongs to the zinc-containing alcohol dehydrogenase family. In the C-terminal section; belongs to the paxM FAD-dependent monooxygenase family.

Its pathway is secondary metabolite biosynthesis. Functionally, dual trans-enoyl reductase/FAD-dependent monooxygenase; part of the gene cluster that mediates the biosynthesis of azaterrilone A and other azaphilones, a class of fungal metabolites characterized by a highly oxygenated pyrano-quinone bicyclic core and exhibiting a broad range of bioactivities. The first step of the pathway begins with the non-reducing polyketide synthase tazA that assembles one acetyl-CoA starter unit, five malonyl-CoA units, and catalyzes a series of Claisen condensations, methylation, PT-mediated cyclization, and finally releases the first hexaketide precursor through the R-domain. The tazA product then undergoes reduction on its terminal ketone and the following pyran-ring formation by yet undetermined enzyme(s). Dehydration and enoyl reduction, possibly involving the trans-enoyl reductase tazE leads to the next intermediate. TazD is predicted as an acetyltransferase and might catalyze the acetylation steps leading to the synthesis of azaterrilone A. Azaterrilone A is not the final product of the taz pathway and both the highly reducing polyketide synthase tazB and the dual enzyme tazHJ catalyze late steps of the pathway, leading to the production of the 2 final stereoisomers that contain additional polyketide modification whose structures have still to be determined. This chain is Dual trans-enoyl reductase/FAD-dependent monooxygenase tazHJ, found in Aspergillus terreus (strain NIH 2624 / FGSC A1156).